Here is a 313-residue protein sequence, read N- to C-terminus: Porphobilinogen deaminase (313 aa).

S-(dipyrrolylmethanemethyl)cysteine is present on Cys242.

Belongs to the HMBS family. In terms of assembly, monomer. The cofactor is dipyrromethane.

The catalysed reaction is 4 porphobilinogen + H2O = hydroxymethylbilane + 4 NH4(+). It participates in porphyrin-containing compound metabolism; protoporphyrin-IX biosynthesis; coproporphyrinogen-III from 5-aminolevulinate: step 2/4. Tetrapolymerization of the monopyrrole PBG into the hydroxymethylbilane pre-uroporphyrinogen in several discrete steps. This chain is Porphobilinogen deaminase, found in Proteus mirabilis (strain HI4320).